The primary structure comprises 310 residues: Porphobilinogen deaminase (310 aa).

C242 is subject to S-(dipyrrolylmethanemethyl)cysteine.

The protein belongs to the HMBS family. As to quaternary structure, monomer. The cofactor is dipyrromethane.

The enzyme catalyses 4 porphobilinogen + H2O = hydroxymethylbilane + 4 NH4(+). It functions in the pathway porphyrin-containing compound metabolism; protoporphyrin-IX biosynthesis; coproporphyrinogen-III from 5-aminolevulinate: step 2/4. Functionally, tetrapolymerization of the monopyrrole PBG into the hydroxymethylbilane pre-uroporphyrinogen in several discrete steps. This Shewanella baltica (strain OS195) protein is Porphobilinogen deaminase.